Reading from the N-terminus, the 184-residue chain is Adenine phosphoribosyltransferase (184 aa).

Belongs to the purine/pyrimidine phosphoribosyltransferase family. As to quaternary structure, homodimer.

The protein localises to the cytoplasm. It carries out the reaction AMP + diphosphate = 5-phospho-alpha-D-ribose 1-diphosphate + adenine. The protein operates within purine metabolism; AMP biosynthesis via salvage pathway; AMP from adenine: step 1/1. Catalyzes a salvage reaction resulting in the formation of AMP, that is energically less costly than de novo synthesis. The sequence is that of Adenine phosphoribosyltransferase from Parafrankia sp. (strain EAN1pec).